The sequence spans 747 residues: DNA ligase (747 aa).

NAD(+) is bound by residues 113 to 117 (DRAYD), 161 to 162 (SI), and Glu190. The active-site N6-AMP-lysine intermediate is Lys192. Residues Arg213, Glu249, Lys364, and Lys388 each contribute to the NAD(+) site. The Zn(2+) site is built by Cys479, Cys482, Cys495, and Cys501. In terms of domain architecture, BRCT spans 660-747 (TTNAPLSDLT…EHDDTLTWPP (88 aa)).

It belongs to the NAD-dependent DNA ligase family. LigA subfamily. The cofactor is Mg(2+). Mn(2+) serves as cofactor.

It carries out the reaction NAD(+) + (deoxyribonucleotide)n-3'-hydroxyl + 5'-phospho-(deoxyribonucleotide)m = (deoxyribonucleotide)n+m + AMP + beta-nicotinamide D-nucleotide.. Functionally, DNA ligase that catalyzes the formation of phosphodiester linkages between 5'-phosphoryl and 3'-hydroxyl groups in double-stranded DNA using NAD as a coenzyme and as the energy source for the reaction. It is essential for DNA replication and repair of damaged DNA. The polypeptide is DNA ligase (Haloquadratum walsbyi (strain DSM 16790 / HBSQ001)).